The primary structure comprises 272 residues: Plastid division protein PDV1 (272 aa).

The Cytoplasmic segment spans residues 1-206; the sequence is MGEMEIEEIE…KRALGFNHVK (206 aa). The disordered stretch occupies residues 40-61; it reads KPSNRSEKRKNPHGNSGEDKRP. Positions 78-102 form a coiled coil; that stretch reads IQEAKSLNAIRTALENLEDQLEFFH. Residues 207–225 traverse the membrane as a helical segment; it reads GVLGNAAIFAISVVAMLHL. Residues 226 to 272 lie on the Chloroplast intermembrane side of the membrane; that stretch reads HQVATSEHHLQKKEDRFYRSQQRKTYGRDKSSADRSLDHLDVMMARG.

As to quaternary structure, interacts (via C-terminus) with CDP1/PARC6 (via C-terminus). Interacts with ARC5/DRP5B. As to expression, expressed in young developing leaves, root tips, shoot apices, and flower buds (sepals, petals, stamens, and pistils), but not in developed tissues.

The protein localises to the plastid. The protein resides in the chloroplast outer membrane. Component of the plastid division machinery. Required to mediate the dissociation of ARC5/DRP5B from plastid outer envelope membranes (OEMs) at the midplastid constriction site in the cytoplasm, thus triggering ARC5/DRP5B ring turnover at the chloroplast division site. Binding to phosphatidylinositol 4-phosphate (PI4P) modulates negatively chloroplast division. The chain is Plastid division protein PDV1 from Arabidopsis thaliana (Mouse-ear cress).